The chain runs to 306 residues: RNA pseudouridylate synthase domain-containing protein 1 (306 aa).

An N-acetylmethionine modification is found at methionine 1. Residue aspartate 67 is part of the active site. Residues 255 to 290 (RTDPDPDPMSGGPRPCSPSTPQPRPGRPPPETEAQR) form a disordered region. The span at 269-285 (PCSPSTPQPRPGRPPPE) shows a compositional bias: pro residues.

This sequence belongs to the pseudouridine synthase RluA family.

This chain is RNA pseudouridylate synthase domain-containing protein 1 (Rpusd1), found in Mus musculus (Mouse).